We begin with the raw amino-acid sequence, 783 residues long: BMP/retinoic acid-inducible neural-specific protein 2 (783 aa).

The signal sequence occupies residues 1 to 33; it reads MRWQCGTRFRGLRPVVAPWTALLALGLPGWVLA. In terms of domain architecture, MACPF spans 85-281; it reads RYRIYREFAR…FVAAALSYIT (197 aa). N-linked (GlcNAc...) asparagine glycans are attached at residues N185, N354, N473, N579, N626, and N658.

It belongs to the BRINP family.

The protein resides in the secreted. Functionally, inhibits neuronal cell proliferation by negative regulation of the cell cycle transition. This chain is BMP/retinoic acid-inducible neural-specific protein 2 (BRINP2), found in Pongo abelii (Sumatran orangutan).